The primary structure comprises 407 residues: Chorismate synthase (407 aa).

Residues arginine 43 and arginine 49 each coordinate NADP(+). Residues 143–145 (RSS), 264–265 (QA), glycine 308, 323–327 (KPIST), and arginine 349 each bind FMN.

Belongs to the chorismate synthase family. As to quaternary structure, homotetramer. It depends on FMNH2 as a cofactor.

It catalyses the reaction 5-O-(1-carboxyvinyl)-3-phosphoshikimate = chorismate + phosphate. It participates in metabolic intermediate biosynthesis; chorismate biosynthesis; chorismate from D-erythrose 4-phosphate and phosphoenolpyruvate: step 7/7. In terms of biological role, catalyzes the anti-1,4-elimination of the C-3 phosphate and the C-6 proR hydrogen from 5-enolpyruvylshikimate-3-phosphate (EPSP) to yield chorismate, which is the branch point compound that serves as the starting substrate for the three terminal pathways of aromatic amino acid biosynthesis. This reaction introduces a second double bond into the aromatic ring system. The chain is Chorismate synthase from Corynebacterium efficiens (strain DSM 44549 / YS-314 / AJ 12310 / JCM 11189 / NBRC 100395).